A 287-amino-acid chain; its full sequence is UPF0725 protein At1g19060 (287 aa).

It belongs to the UPF0725 (EMB2204) family.

This is UPF0725 protein At1g19060 from Arabidopsis thaliana (Mouse-ear cress).